The sequence spans 189 residues: dCTP deaminase (189 aa).

DCTP is bound by residues 112–117 (KSTYAR), 136–138 (TLE), Q157, Y171, and Q181. E138 (proton donor/acceptor) is an active-site residue.

This sequence belongs to the dCTP deaminase family. Homotrimer.

It carries out the reaction dCTP + H2O + H(+) = dUTP + NH4(+). It functions in the pathway pyrimidine metabolism; dUMP biosynthesis; dUMP from dCTP (dUTP route): step 1/2. Catalyzes the deamination of dCTP to dUTP. This is dCTP deaminase from Acinetobacter baylyi (strain ATCC 33305 / BD413 / ADP1).